A 273-amino-acid chain; its full sequence is NH(3)-dependent NAD(+) synthetase (273 aa).

46–53 (GISGGQDS) is a binding site for ATP. Asp-52 contributes to the Mg(2+) binding site. Residue Arg-139 coordinates deamido-NAD(+). Thr-159 contributes to the ATP binding site. Glu-164 is a Mg(2+) binding site. Residues Lys-172 and Asp-179 each contribute to the deamido-NAD(+) site. ATP is bound by residues Lys-188 and Thr-210. 259–260 (HK) lines the deamido-NAD(+) pocket.

This sequence belongs to the NAD synthetase family. In terms of assembly, homodimer.

The catalysed reaction is deamido-NAD(+) + NH4(+) + ATP = AMP + diphosphate + NAD(+) + H(+). It participates in cofactor biosynthesis; NAD(+) biosynthesis; NAD(+) from deamido-NAD(+) (ammonia route): step 1/1. Catalyzes the ATP-dependent amidation of deamido-NAD to form NAD. Uses ammonia as a nitrogen source. The sequence is that of NH(3)-dependent NAD(+) synthetase from Streptococcus thermophilus (strain ATCC BAA-250 / LMG 18311).